Here is a 385-residue protein sequence, read N- to C-terminus: 28S rRNA (uridine-N(3))-methyltransferase (385 aa).

Disordered stretches follow at residues 1–35 and 47–72; these read MAERPRKRPCGPGEHGQRVEWRKWKQQKKEEKKKW and QRAQEEEAKRQEEEEEAAAQRSNQGR. Composition is skewed to basic and acidic residues over residues 15 to 35 and 47 to 58; these read HGQRVEWRKWKQQKKEEKKKW and QRAQEEEAKRQE. The S-adenosyl-L-methionine site is built by R293, G313, N342, and T343.

Belongs to the class IV-like SAM-binding methyltransferase superfamily. In terms of assembly, interacts with INCA1.

The protein localises to the cytoplasm. Its subcellular location is the cytoskeleton. It localises to the spindle. The protein resides in the chromosome. It is found in the centromere. The protein localises to the kinetochore. Its subcellular location is the microtubule organizing center. It localises to the centrosome. The enzyme catalyses uridine in 28S rRNA + S-adenosyl-L-methionine = N(3)-methyluridine in 28S rRNA + S-adenosyl-L-homocysteine + H(+). S-adenosyl-L-methionine-dependent methyltransferase that specifically methylates the N3 position of a uridine in 28S rRNA. Required for association of the centrosomes with the poles of the bipolar mitotic spindle during metaphase. Also involved in chromosome alignment. May promote centrosome maturation probably by recruiting A-kinase anchor protein AKAP9 to centrosomes in early mitosis. Binds specifically to miRNA MIR145 hairpin, regulates MIR145 expression at a postranscriptional level. This chain is 28S rRNA (uridine-N(3))-methyltransferase, found in Mus musculus (Mouse).